A 60-amino-acid chain; its full sequence is Large ribosomal subunit protein bL32 (60 aa).

The tract at residues 1–60 is disordered; that stretch reads MAVQQNKKSPSKRGMHRSHDALTNPPLAIEPTTGETHLRHHISPNGFYRGKKVIKTKNDD. Over residues 49–60 the composition is skewed to basic residues; the sequence is RGKKVIKTKNDD.

It belongs to the bacterial ribosomal protein bL32 family.

The chain is Large ribosomal subunit protein bL32 from Nitrosomonas eutropha (strain DSM 101675 / C91 / Nm57).